The primary structure comprises 325 residues: Phospholipid phosphatase-related protein type 1 (325 aa).

Transmembrane regions (helical) follow at residues 11–31 (YSIIPCFIFVELVIMAGTVLL), 67–87 (FISPLVLYCVLAATPTAIIFI), and 127–147 (FIGVFAFGLFATDIFVNAGQV). An N-linked (GlcNAc...) asparagine glycan is attached at Asn163. A run of 3 helical transmembrane segments spans residues 201 to 218 (AALSIYSALYATMYITST), 230 to 247 (VLCLGTLCCAFLTGLNRV), and 257 to 277 (VIGGFILGTAIALFLGLCVVH). Asn316 carries N-linked (GlcNAc...) asparagine glycosylation.

It belongs to the PA-phosphatase related phosphoesterase family.

Its subcellular location is the cell membrane. The protein resides in the cell projection. It is found in the neuron projection. May play a role in neurite outgrowth and neurogenesis. The sequence is that of Phospholipid phosphatase-related protein type 1 from Xenopus tropicalis (Western clawed frog).